The sequence spans 363 residues: Spermidine/putrescine import ATP-binding protein PotA (363 aa).

The region spanning 4 to 234 is the ABC transporter domain; it reads LELRNVIRRF…PANRFIADFI (231 aa). ATP is bound at residue 36 to 43; sequence GPSGCGKT.

This sequence belongs to the ABC transporter superfamily. Spermidine/putrescine importer (TC 3.A.1.11.1) family. As to quaternary structure, the complex is composed of two ATP-binding proteins (PotA), two transmembrane proteins (PotB and PotC) and a solute-binding protein (PotD).

Its subcellular location is the cell inner membrane. It catalyses the reaction ATP + H2O + polyamine-[polyamine-binding protein]Side 1 = ADP + phosphate + polyamineSide 2 + [polyamine-binding protein]Side 1.. Its function is as follows. Part of the ABC transporter complex PotABCD involved in spermidine/putrescine import. Responsible for energy coupling to the transport system. The polypeptide is Spermidine/putrescine import ATP-binding protein PotA (Nitrosomonas eutropha (strain DSM 101675 / C91 / Nm57)).